We begin with the raw amino-acid sequence, 220 residues long: Zip homologous protein 1 (220 aa).

An RING-type zinc finger spans residues Cys6–Lys44. Positions Leu124–Lys155 form a coiled coil. Disordered regions lie at residues Glu166 to Asp186 and Arg201 to Phe220. Residues Gly171–Val180 show a composition bias toward polar residues.

As to quaternary structure, interacts with zhp-2; the interaction is required for their chromosome association and stability. As to expression, expressed in the germline.

The protein resides in the chromosome. Its function is as follows. Recruited co-dependently with zhp-2 to the synaptonemal complex between homologous chromosome pairs to regulate the formation and number of crossover events between homologs during meiotic recombination. Together with zhp-2, promotes the accumulation of pro-crossover proteins, including zhp-3 and zhp-4, at a designated crossover site along the recombination intermediate. Limits the number of crossover sites along a recombination intermediate by restricting the association of these pro-crossover proteins with other recombination sites during late prophase. Also, together with zhp-2, plays a role in chromosome remodeling following crossover formation to promote two successive rounds of chromosome segregation during meiosis. This Caenorhabditis elegans protein is Zip homologous protein 1.